A 712-amino-acid chain; its full sequence is Protein TAPT1 homolog (712 aa).

Low complexity predominate over residues 1 to 21 (MNNVPSTSRENSRNPSESSSS). 2 disordered regions span residues 1 to 22 (MNNVPSTSRENSRNPSESSSSI) and 44 to 66 (ITMSAPPSPATPRKIDFSAEIET). Helical transmembrane passes span 196 to 216 (FFYLFTFLPLRFLMSIFGALL), 222 to 242 (TSAETCDFLKVVIIVAASMLI), 305 to 325 (TCGHLIVAILYATLHSFLVIL), 379 to 399 (HIFALLFVVMIRNMTAVNWNI), 402 to 422 (FTEMIPDIIMVVGCEYFVDWL), 470 to 490 (GFIPIPLSIMIIRVLSQTFTL), and 497 to 517 (IIFGIGWLLVFAVKICNGVVM). Basic and acidic residues predominate over residues 596–619 (EIRRSTDRETAVSHLTARSDERTP). Residues 596-712 (EIRRSTDRET…MPEQGVQRIE (117 aa)) form a disordered region. Residues 656 to 667 (TENNTNSNSEQA) are compositionally biased toward polar residues. The span at 675–692 (TAAPVTSSASTNTNATSS) shows a compositional bias: low complexity.

This sequence belongs to the TAPT1 family.

It is found in the membrane. The sequence is that of Protein TAPT1 homolog from Caenorhabditis elegans.